Here is a 213-residue protein sequence, read N- to C-terminus: Transcriptional regulatory protein YdfI (213 aa).

Residues 3–118 (KVLIVDDHLV…TLFHTMDAAI (116 aa)) enclose the Response regulatory domain. D54 is subject to 4-aspartylphosphate. The HTH luxR-type domain occupies 142 to 207 (KQRNETQLTE…EAVTIAMQKG (66 aa)). Residues 166 to 185 (SKAIAFDLGVSERTVKSRLT) constitute a DNA-binding region (H-T-H motif).

In terms of processing, phosphorylated by YdfH.

The protein resides in the cytoplasm. Functionally, member of the two-component regulatory system YdfH/YdfI. Regulates the transcription of ydfJ by binding to its promoter region. The protein is Transcriptional regulatory protein YdfI (ydfI) of Bacillus subtilis (strain 168).